The primary structure comprises 110 residues: Cell cycle protein GpsB (110 aa).

Residues 32 to 73 (LDDVIKDYENYLEQIEKLQMENRRLQQALDKKESEASNVRNS) adopt a coiled-coil conformation.

It belongs to the GpsB family. Forms polymers through the coiled coil domains. Interacts with PBP1, MreC and EzrA.

The protein resides in the cytoplasm. Its function is as follows. Divisome component that associates with the complex late in its assembly, after the Z-ring is formed, and is dependent on DivIC and PBP2B for its recruitment to the divisome. Together with EzrA, is a key component of the system that regulates PBP1 localization during cell cycle progression. Its main role could be the removal of PBP1 from the cell pole after pole maturation is completed. Also contributes to the recruitment of PBP1 to the division complex. Not essential for septum formation. This is Cell cycle protein GpsB from Streptococcus agalactiae serotype Ia (strain ATCC 27591 / A909 / CDC SS700).